We begin with the raw amino-acid sequence, 877 residues long: Alanine--tRNA ligase (877 aa).

Residues H567, H571, C669, and H673 each contribute to the Zn(2+) site.

This sequence belongs to the class-II aminoacyl-tRNA synthetase family. It depends on Zn(2+) as a cofactor.

Its subcellular location is the cytoplasm. It carries out the reaction tRNA(Ala) + L-alanine + ATP = L-alanyl-tRNA(Ala) + AMP + diphosphate. Its function is as follows. Catalyzes the attachment of alanine to tRNA(Ala) in a two-step reaction: alanine is first activated by ATP to form Ala-AMP and then transferred to the acceptor end of tRNA(Ala). Also edits incorrectly charged Ser-tRNA(Ala) and Gly-tRNA(Ala) via its editing domain. In Lactobacillus delbrueckii subsp. bulgaricus (strain ATCC 11842 / DSM 20081 / BCRC 10696 / JCM 1002 / NBRC 13953 / NCIMB 11778 / NCTC 12712 / WDCM 00102 / Lb 14), this protein is Alanine--tRNA ligase.